A 429-amino-acid chain; its full sequence is Inner membrane transport protein RhmT (429 aa).

Residues 1-16 (MSTALLDAVVKKNRVR) are Cytoplasmic-facing. The chain crosses the membrane as a helical span at residues 17–37 (LIPFMLALYVLAFLDRSNIGF). Residues 38–54 (AKQTYQIDTGLSNEAYA) lie on the Periplasmic side of the membrane. A helical transmembrane segment spans residues 55-75 (LGAGIFFVVYAFLGVPANLLM). The Cytoplasmic portion of the chain corresponds to 76 to 81 (RKLGAR). A helical transmembrane segment spans residues 82–102 (TWIGTTTLLWGFLSAAMAWAD). Residues 103–143 (TEAKFLIVRTLLRAAEAGFFPGMIYLTSQWFPQRNRASIMG) are Periplasmic-facing. Residues 144 to 164 (LFYMGAPLALTLGSPLSGALL) form a helical membrane-spanning segment. The Cytoplasmic portion of the chain corresponds to 165–174 (EMHGFMGHPG). The chain crosses the membrane as a helical span at residues 175–195 (WFWMFVIEGLLAVGAGVFTFF). The Periplasmic portion of the chain corresponds to 196–242 (WLDDTPEQARFLSKQEKTLLINQLASEEQQKVTSRLSDALRNGRVWQ). A helical membrane pass occupies residues 243-263 (LAIIYLTIQVAVYGLIFFLPT). The Cytoplasmic segment spans residues 264–274 (QVAALLGTKVG). The chain crosses the membrane as a helical span at residues 275–295 (FTASVVTAIPWVAALFGTWLI). The Periplasmic segment spans residues 296 to 324 (PRYSDKTGERRNVAALTLLAAGIGIGLSG). A helical transmembrane segment spans residues 325 to 345 (LLSPVMAIVALCVAAIGFIAV). At 346-361 (QPVFWTMPTQLLSGTA) the chain is on the cytoplasmic side. The chain crosses the membrane as a helical span at residues 362-382 (LAAGIGFVNLFGAVGGFIAPI). At 383 to 394 (LRVKAETLFASD) the chain is on the periplasmic side. A helical membrane pass occupies residues 395 to 415 (AAGLLTLAAVAVIGSLIIFTL). Topologically, residues 416–429 (RVNRTVAQTDVAHH) are cytoplasmic.

Belongs to the major facilitator superfamily. Phthalate permease family.

It localises to the cell inner membrane. The polypeptide is Inner membrane transport protein RhmT (rhmT) (Escherichia coli (strain K12)).